Here is a 2181-residue protein sequence, read N- to C-terminus: Non-reducing polyketide synthase subA (2181 aa).

Residues 74 to 180 (QWVKGNSTQP…LALCCGAYID (107 aa)) are N-terminal acylcarrier protein transacylase domain (SAT). The 433-residue stretch at 347–779 (QAQLLVLGPV…GTNAAMLVCQ (433 aa)) folds into the Ketosynthase family 3 (KS3) domain. Residues C525, H661, and H702 each act as for beta-ketoacyl synthase activity in the active site. The segment at 891–1193 (VLAGQTGRRV…SFYPAALGEP (303 aa)) is malonyl-CoA:ACP transacylase (MAT) domain. The active-site For acyl/malonyl transferase activity is S977. Positions 1269–1401 (VSLIGKTQNA…GVITLQEVYS (133 aa)) are N-terminal hotdog fold. The region spanning 1269 to 1579 (VSLIGKTQNA…FQKIAISSLK (311 aa)) is the PKS/mFAS DH domain. The interval 1276 to 1573 (QNAGVQTVEY…TILGAKFQKI (298 aa)) is product template (PT) domain. The segment at 1425-1579 (SASVVQGDFI…FQKIAISSLK (155 aa)) is C-terminal hotdog fold. The tract at residues 1652–1673 (ISGSSRSTSSSPPSLESRSQAM) is disordered. A compositionally biased stretch (low complexity) spans 1653–1670 (SGSSRSTSSSPPSLESRS). The region spanning 1677 to 1753 (EITEGAGSAL…TLFHTIFPQQ (77 aa)) is the Carrier domain. Residue S1713 is modified to O-(pantetheine 4'-phosphoryl)serine. Residues 1982-2164 (EFMNCLFSYN…QSGFGHVDWT (183 aa)) form a methyltransferase (CMeT) domain region.

It participates in secondary metabolite biosynthesis; terpenoid biosynthesis. Functionally, non-reducing polyketide synthase; part of the gene cluster that mediates the biosynthesis of the immunosuppressants subglutinols, meroterpenoids consisting of an alpha-pyrone (4-hydroxy-5,6-dimethyl-2-pyrone) moiety attached to a decalin core fused to a five-membered cyclic ether carrying a prenylside chain. The first step of the pathway is the synthesis of the alpha-pyrone moiety by the polyketide synthase subA via condensation of one acetyl-CoA starter unit with 3 malonyl-CoA units and 2 methylations. The alpha-pyrone is then combined with geranylgeranyl pyrophosphate (GGPP) formed by the GGPP synthase subD through the action of the prenyltransferase subC to yield a linear alpha-pyrone diterpenoid. Subsequent steps in the subglutinol biosynthetic pathway involve the decalin core formation, which is thought to be initiated by the epoxidation of the C10-C11 olefin by the FAD-dependent oxidoreductase subE. The following cyclization cascade would be catalyzed by the terpene cyclase subB. Lastly, the FAD-dependent dehydrogenase subF probably catalyzes the five-membered cyclic ether formation to complete the formation of subglutinol A. Subsequent redox reactions appear to give rise to subglutinol C and D, however, it remains unclear which enzymes are responsible for these transformations. SubD may have secondary function in the conversion of the identified subglutinols to subglutinol analog 45, which seems to be the major product of the cluster. This chain is Non-reducing polyketide synthase subA, found in Metarhizium robertsii (strain ARSEF 23 / ATCC MYA-3075) (Metarhizium anisopliae (strain ARSEF 23)).